Reading from the N-terminus, the 220-residue chain is PKHD-type hydroxylase sync_1544 (220 aa).

The Fe2OG dioxygenase domain maps to 79–173 (KLHRFLISKT…RTVCVGWIES (95 aa)). The Fe cation site is built by H97, D99, and H154. R164 is a binding site for 2-oxoglutarate.

Requires Fe(2+) as cofactor. L-ascorbate is required as a cofactor.

This Synechococcus sp. (strain CC9311) protein is PKHD-type hydroxylase sync_1544.